The following is a 372-amino-acid chain: Putative glutamate--cysteine ligase 2 (372 aa).

It belongs to the glutamate--cysteine ligase type 2 family. YbdK subfamily. As to quaternary structure, homodimer.

It carries out the reaction L-cysteine + L-glutamate + ATP = gamma-L-glutamyl-L-cysteine + ADP + phosphate + H(+). Its function is as follows. ATP-dependent carboxylate-amine ligase which exhibits weak glutamate--cysteine ligase activity. The sequence is that of Putative glutamate--cysteine ligase 2 (ybdK) from Salmonella arizonae (strain ATCC BAA-731 / CDC346-86 / RSK2980).